The chain runs to 76 residues: Conotoxin TxMEKL-011 (76 aa).

The first 19 residues, 1 to 19 (MEKLTILLLVAAVLMSTQA), serve as a signal peptide directing secretion. Positions 20-45 (LVERAGENRSKENIKFLLKRKRAADR) are excised as a propeptide. Disulfide bonds link cysteine 51/cysteine 65, cysteine 58/cysteine 69, and cysteine 64/cysteine 73.

This sequence belongs to the conotoxin O2 superfamily. In terms of tissue distribution, expressed by the venom duct.

It localises to the secreted. The polypeptide is Conotoxin TxMEKL-011 (Conus textile (Cloth-of-gold cone)).